A 519-amino-acid chain; its full sequence is MKSKVVIFDTTLRDGEQALQASLSVKEKLQIALSLEKCGIDILEIGFPVSSPGDFKSVQTISKNIKNSRICSLARCIEKDIDAAGEAMSSSDSFRIHIFLATSTLHMESKLKKNFNEIIDMAVFSVKKALRYTDDIEFSCEDATRTTMDNLCRIVETLIKSGVKTINIPDTVGYTVPNELSCIIKNLFERVPNIHKSIISVHCHDDLGMAVGNSISAIQAGARQIEGTINGIGERAGNTALEEIIMAIKVREDILSVSTNINYKEIYRTSKIVSQICNMPIPSNKAIVGSNAFAHSSGIHQDGVLKNRKNYEIMEPSSIGLKEVKLNLTSRSGRAAVKHYMDEMGYNNSDYNIDELYTAFLKLADKKGQVFDYDLEALAFINKQQDEWEYFSLKFFSVQSISNSLSTASVKLLCGKKTYTESSTTSNGPVDAIYQALNRIACFPIILQKFQLVAKGKGKDALGQVDILVEHKKRKFHGVGLATDIIEASAQAMINVLNNIWKAKQVNKKLKILKDFKKK.

Residues 5-267 (VVIFDTTLRD…STNINYKEIY (263 aa)) form the Pyruvate carboxyltransferase domain. 4 residues coordinate Mn(2+): aspartate 14, histidine 202, histidine 204, and asparagine 238. Residues 392–519 (SLKFFSVQSI…LKILKDFKKK (128 aa)) form a regulatory domain region.

It belongs to the alpha-IPM synthase/homocitrate synthase family. LeuA type 1 subfamily. In terms of assembly, homodimer. The cofactor is Mn(2+).

It localises to the cytoplasm. The enzyme catalyses 3-methyl-2-oxobutanoate + acetyl-CoA + H2O = (2S)-2-isopropylmalate + CoA + H(+). It participates in amino-acid biosynthesis; L-leucine biosynthesis; L-leucine from 3-methyl-2-oxobutanoate: step 1/4. Its function is as follows. Catalyzes the condensation of the acetyl group of acetyl-CoA with 3-methyl-2-oxobutanoate (2-ketoisovalerate) to form 3-carboxy-3-hydroxy-4-methylpentanoate (2-isopropylmalate). The polypeptide is 2-isopropylmalate synthase (Buchnera aphidicola subsp. Acyrthosiphon pisum (strain APS) (Acyrthosiphon pisum symbiotic bacterium)).